The primary structure comprises 135 residues: NAD(P)H-quinone oxidoreductase subunit 3 (135 aa).

A run of 3 helical transmembrane segments spans residues 15–35 (LMFVLPGYDAFLGFLLIAAAV), 79–99 (MFALVFVIFDVETVFLYPWAV), and 104–124 (LGLLAFIEALVFITILLVALA).

The protein belongs to the complex I subunit 3 family. As to quaternary structure, NDH-1 can be composed of about 15 different subunits; different subcomplexes with different compositions have been identified which probably have different functions.

Its subcellular location is the cellular thylakoid membrane. The enzyme catalyses a plastoquinone + NADH + (n+1) H(+)(in) = a plastoquinol + NAD(+) + n H(+)(out). It catalyses the reaction a plastoquinone + NADPH + (n+1) H(+)(in) = a plastoquinol + NADP(+) + n H(+)(out). In terms of biological role, NDH-1 shuttles electrons from an unknown electron donor, via FMN and iron-sulfur (Fe-S) centers, to quinones in the respiratory and/or the photosynthetic chain. The immediate electron acceptor for the enzyme in this species is believed to be plastoquinone. Couples the redox reaction to proton translocation, and thus conserves the redox energy in a proton gradient. Cyanobacterial NDH-1 also plays a role in inorganic carbon-concentration. The protein is NAD(P)H-quinone oxidoreductase subunit 3 of Synechococcus sp. (strain CC9311).